The following is a 252-amino-acid chain: Type I iodothyronine deiodinase (252 aa).

Residues 1–17 (MESLLQTIKLMLRYIQK) are Extracellular-facing. Residues 18-38 (ALILFFLFLYVVVGKVLMFLF) traverse the membrane as a helical; Signal-anchor for type III membrane protein segment. The Cytoplasmic segment spans residues 39–252 (PQTMASVLKS…EVCSVLEKKK (214 aa)). Residue Sec-130 is part of the active site. A non-standard amino acid (selenocysteine) is located at residue Sec-130.

The protein belongs to the iodothyronine deiodinase family. Predominantly monomer. Can form homodimers but homodimerization is not essential for enzyme activity.

The protein localises to the cell membrane. It localises to the endoplasmic reticulum membrane. Its subcellular location is the basolateral cell membrane. The catalysed reaction is 3,3',5-triiodo-L-thyronine + iodide + A + H(+) = L-thyroxine + AH2. It carries out the reaction 3,3',5'-triiodo-L-thyronine + iodide + A + H(+) = L-thyroxine + AH2. It catalyses the reaction 3,3'-diiodo-L-thyronine + iodide + A + H(+) = 3,3',5'-triiodo-L-thyronine + AH2. The enzyme catalyses 3,3'-diiodo-L-thyronine + iodide + A + H(+) = 3,3',5-triiodo-L-thyronine + AH2. The catalysed reaction is 3'-iodo-L-thyronine + iodide + A + H(+) = 3',5'-diiodo-L-thyronine + AH2. It carries out the reaction 3-iodo-L-thyronine + iodide + A + H(+) = 3,5-diiodo-L-thyronine + AH2. It catalyses the reaction 3-iodo-L-thyronine + iodide + A + H(+) = 3,3'-diiodo-L-thyronine + AH2. The enzyme catalyses 3,3'-diiodothyronamine + iodide + A + H(+) = 3,3',5'-triiodothyronamine + AH2. The catalysed reaction is 3'-iodothyronamine + iodide + A + H(+) = 3',5'-diiodothyronamine + AH2. It carries out the reaction 3-iodothyronamine + iodide + A + H(+) = 3,3'-diiodothyronamine + AH2. It catalyses the reaction 3,3'-diiodothyronamine + iodide + A + H(+) = 3,3',5-triiodothyronamine + AH2. The enzyme catalyses 3-iodothyronamine + iodide + A + H(+) = 3,5-diiodothyronamine + AH2. The catalysed reaction is 3,3'-diiodo-L-thyronine sulfate + iodide + A + H(+) = 3,3',5'-triiodo-L-thyronine sulfate + AH2. It carries out the reaction 3,3',5'-triiodo-L-thyronine sulfate + iodide + A + H(+) = L-thyroxine sulfate + AH2. It catalyses the reaction 3,3'-diiodo-L-thyronine sulfate + iodide + A + H(+) = 3,3',5-triiodo-L-thyronine sulfate + AH2. Its activity is regulated as follows. Lacks sensitivity to 6-n-propylthiouracil. Plays a crucial role in the metabolism of thyroid hormones (TH) and has specific roles in TH activation and inactivation by deiodination. Catalyzes the deiodination of L-thyroxine (T4) to 3,5,3'-triiodothyronine (T3) and 3,3',5'-triiodothyronine (rT3) to 3,3'-diiodothyronine (3,3'-T2) via outer-ring deiodination (ORD). Catalyzes the deiodiantion of T4 to rT3 and T3 to 3,3'-T2 via inner-ring deiodination (IRD). Catalyzes the deiodination of 3',5'-diiodothyronine (3',5'-T2) to 3'-monoiodothyronine (3'-T1) via ORD. Catalyzes the deiodination of 3,5-diiodothyronine (3,5-T2) to 3-monoiodothyronine (3-T1) and 3,3'-T2 to 3-T1 via IRD. Catalyzes the phenolic ring deiodinations of 3,3',5'-triiodothyronamine, 3',5'-diiodothyronamine and 3,3'-diiodothyronamine as well as tyrosyl ring deiodinations of 3,5,3'-triiodothyronamine and 3,5-diiodothyronamine. Catalyzes the deiodination of L-thyroxine sulfate and 3,3',5-triiodo-L-thyronine sulfate via IRD and of 3,3',5'-triiodo-L-thyronine sulfate via ORD. This chain is Type I iodothyronine deiodinase (dio1), found in Xenopus laevis (African clawed frog).